The primary structure comprises 357 residues: UDP-3-O-acylglucosamine N-acyltransferase (357 aa).

Residue His-258 is the Proton acceptor of the active site.

Belongs to the transferase hexapeptide repeat family. LpxD subfamily. In terms of assembly, homotrimer.

It carries out the reaction a UDP-3-O-[(3R)-3-hydroxyacyl]-alpha-D-glucosamine + a (3R)-hydroxyacyl-[ACP] = a UDP-2-N,3-O-bis[(3R)-3-hydroxyacyl]-alpha-D-glucosamine + holo-[ACP] + H(+). It functions in the pathway bacterial outer membrane biogenesis; LPS lipid A biosynthesis. In terms of biological role, catalyzes the N-acylation of UDP-3-O-acylglucosamine using 3-hydroxyacyl-ACP as the acyl donor. Is involved in the biosynthesis of lipid A, a phosphorylated glycolipid that anchors the lipopolysaccharide to the outer membrane of the cell. The chain is UDP-3-O-acylglucosamine N-acyltransferase from Azorhizobium caulinodans (strain ATCC 43989 / DSM 5975 / JCM 20966 / LMG 6465 / NBRC 14845 / NCIMB 13405 / ORS 571).